The following is a 190-amino-acid chain: Adenylate kinase (190 aa).

11 to 16 (GSGKGT) serves as a coordination point for ATP. Residues 31-60 (STGDVLRGEMKAETELGKIAKDYIEKGQLV) form an NMP region. AMP contacts are provided by residues Thr32, Arg37, 58-60 (QLV), 86-89 (GFPR), and Gln93. An LID region spans residues 127-137 (ERGKVSGRSDD). Arg128 contacts ATP. Arg134 and Arg145 together coordinate AMP. An ATP-binding site is contributed by Gly173.

This sequence belongs to the adenylate kinase family. Monomer.

The protein resides in the cytoplasm. It catalyses the reaction AMP + ATP = 2 ADP. Its pathway is purine metabolism; AMP biosynthesis via salvage pathway; AMP from ADP: step 1/1. Catalyzes the reversible transfer of the terminal phosphate group between ATP and AMP. Plays an important role in cellular energy homeostasis and in adenine nucleotide metabolism. In Parabacteroides distasonis (strain ATCC 8503 / DSM 20701 / CIP 104284 / JCM 5825 / NCTC 11152), this protein is Adenylate kinase.